Consider the following 66-residue polypeptide: Kappa-flavitoxin (66 aa).

Disulfide bonds link C3–C21, C14–C42, C27–C31, C46–C58, and C59–C64.

This sequence belongs to the three-finger toxin family. Long-chain subfamily. Kappa-neurotoxin sub-subfamily. Homo- and heterodimer; non-covalently linked. In terms of tissue distribution, expressed by the venom gland.

It is found in the secreted. In terms of biological role, postsynaptic neurotoxin that binds and inhibits neuronal nicotinic acetylcholine receptors (nAChR) with high affinity (IC(50)&lt;100 nM). Is a selective, and slowly reversible antagonist of alpha-3/CHRNA3-containing and some alpha-4/CHRNA4-containing AChRs. The polypeptide is Kappa-flavitoxin (Bungarus flaviceps flaviceps (Red-headed krait)).